The primary structure comprises 197 residues: Ribosomal RNA large subunit methyltransferase E (197 aa).

S-adenosyl-L-methionine contacts are provided by Gly-50, Trp-52, Asp-67, Asp-83, and Asp-111. Lys-151 serves as the catalytic Proton acceptor.

The protein belongs to the class I-like SAM-binding methyltransferase superfamily. RNA methyltransferase RlmE family.

The protein resides in the cytoplasm. It catalyses the reaction uridine(2552) in 23S rRNA + S-adenosyl-L-methionine = 2'-O-methyluridine(2552) in 23S rRNA + S-adenosyl-L-homocysteine + H(+). Specifically methylates the uridine in position 2552 of 23S rRNA at the 2'-O position of the ribose in the fully assembled 50S ribosomal subunit. The chain is Ribosomal RNA large subunit methyltransferase E from Thermoplasma volcanium (strain ATCC 51530 / DSM 4299 / JCM 9571 / NBRC 15438 / GSS1).